The primary structure comprises 160 residues: Major strawberry allergen Fra a 1.05 (160 aa).

This sequence belongs to the BetVI family. Phosphorylated in vivo. Phosphorylation prevents its activity as ribonuclease.

In terms of biological role, possesses ribonuclease activity in vitro. The protein is Major strawberry allergen Fra a 1.05 of Fragaria ananassa (Strawberry).